The primary structure comprises 255 residues: 5'-nucleotidase SurE (255 aa).

Positions 8, 9, 40, and 92 each coordinate a divalent metal cation.

Belongs to the SurE nucleotidase family. Requires a divalent metal cation as cofactor.

It localises to the cytoplasm. The enzyme catalyses a ribonucleoside 5'-phosphate + H2O = a ribonucleoside + phosphate. Nucleotidase that shows phosphatase activity on nucleoside 5'-monophosphates. The chain is 5'-nucleotidase SurE from Brucella abortus (strain S19).